Reading from the N-terminus, the 570-residue chain is Spermatocyte protein spe-26 (570 aa).

6 Kelch repeats span residues 244-291, 293-338, 341-393, 395-440, 442-487, and 489-535; these read VLII…IVDG, LYLF…SVVY, RIYV…VFEN, IYVS…NHGN, LLIV…SYKG, and LFSV…VAPN.

As to expression, testis, in both spermatogonial cells and spermatocytes.

It localises to the cytoplasm. The protein localises to the cytoskeleton. In terms of biological role, may play a role in the spermatocyte cytoskeleton, possibly interacting with actin. The chain is Spermatocyte protein spe-26 (spe-26) from Caenorhabditis elegans.